Consider the following 296-residue polypeptide: 110 kDa antigen (296 aa).

The 1; approximate repeat unit spans residues 132-143 (EETQKTVEPEQI). Residues 132–296 (EETQKTVEPE…TQETQNTVEP (165 aa)) are 13.5 X 12 AA approximate tandem repeats of E-E-T-Q-K-T-V-E-P-E-Q-T. The interval 133-296 (ETQKTVEPEQ…TQETQNTVEP (164 aa)) is disordered. Residues 144 to 155 (EETQNTVEPEQT) form a 2; approximate repeat. Residues 156–167 (EETQKTVEPEQT) form repeat 3. Residues 168-179 (EETQNTVEPEQI) form a 4; approximate repeat. The stretch at 180–191 (EETQKTVEPEQT) is repeat 5. Positions 181-271 (ETQKTVEPEQ…QTEETQKTVE (91 aa)) are enriched in basic and acidic residues. The stretch at 192–203 (EEAQKTVEPEQT) is one 6; approximate repeat. A run of 6 repeats spans residues 204 to 215 (EETQKTVEPEQT), 216 to 227 (EETQKTVEPEQT), 228 to 239 (EETQKTVEPEQT), 240 to 251 (EETQKTVEPEQT), 252 to 263 (EETQKTVEPEQT), and 264 to 275 (EETQKTVEPEQT). Residues 276–287 (EETQNTVEPEPT) form a 13; approximate repeat. The span at 277–296 (ETQNTVEPEPTQETQNTVEP) shows a compositional bias: polar residues. The 14; truncated repeat unit spans residues 288–293 (QETQNT).

This is 110 kDa antigen from Plasmodium knowlesi.